The primary structure comprises 128 residues: Iron-sulfur cluster insertion protein ErpA (128 aa).

Iron-sulfur cluster is bound by residues Cys-56, Cys-120, and Cys-122.

It belongs to the HesB/IscA family. As to quaternary structure, homodimer. Requires iron-sulfur cluster as cofactor.

Its function is as follows. Required for insertion of 4Fe-4S clusters for at least IspG. This chain is Iron-sulfur cluster insertion protein ErpA, found in Xanthomonas oryzae pv. oryzae (strain MAFF 311018).